The chain runs to 452 residues: 5'-nucleotidase domain-containing protein 1 (452 aa).

Catalysis depends on Asp-16, which acts as the Nucleophile. Mg(2+)-binding residues include Asp-16 and Asp-18. Residue Asp-18 is the Proton donor of the active site. Lys-171 carries the post-translational modification N6-acetyllysine. Residue Asp-313 coordinates Mg(2+). Positions 339 to 361 (GDKDGKPEESEPEEKKGKYEGSK) are enriched in basic and acidic residues. The interval 339–365 (GDKDGKPEESEPEEKKGKYEGSKAKPL) is disordered.

This sequence belongs to the 5'(3')-deoxyribonucleotidase family.

The protein is 5'-nucleotidase domain-containing protein 1 (NT5DC1) of Bos taurus (Bovine).